The primary structure comprises 175 residues: Shikimate kinase (175 aa).

Residue 12-17 coordinates ATP; it reads GAGKTT. Thr16 contributes to the Mg(2+) binding site. Asp34, Arg58, and Gly80 together coordinate substrate. Arg117 lines the ATP pocket. Arg136 is a substrate binding site.

Belongs to the shikimate kinase family. In terms of assembly, monomer. It depends on Mg(2+) as a cofactor.

Its subcellular location is the cytoplasm. It catalyses the reaction shikimate + ATP = 3-phosphoshikimate + ADP + H(+). Its pathway is metabolic intermediate biosynthesis; chorismate biosynthesis; chorismate from D-erythrose 4-phosphate and phosphoenolpyruvate: step 5/7. Its function is as follows. Catalyzes the specific phosphorylation of the 3-hydroxyl group of shikimic acid using ATP as a cosubstrate. This chain is Shikimate kinase, found in Saccharopolyspora erythraea (strain ATCC 11635 / DSM 40517 / JCM 4748 / NBRC 13426 / NCIMB 8594 / NRRL 2338).